Here is a 317-residue protein sequence, read N- to C-terminus: Phospho-N-acetylmuramoyl-pentapeptide-transferase (317 aa).

9 helical membrane-spanning segments follow: residues 4 to 24, 49 to 69, 76 to 96, 112 to 132, 147 to 167, 186 to 206, 223 to 243, 246 to 266, and 297 to 317; these read LIYS…ILIP, TPTM…AVIV, AMIA…DDTL, MILL…NPYI, LGVF…NAVN, FLAL…CAIL, IFMG…VAMI, LPLL…SVIF, and RVVS…FLSL.

The protein belongs to the glycosyltransferase 4 family. MraY subfamily. Requires Mg(2+) as cofactor.

It localises to the cell membrane. It carries out the reaction UDP-N-acetyl-alpha-D-muramoyl-L-alanyl-gamma-D-glutamyl-meso-2,6-diaminopimeloyl-D-alanyl-D-alanine + di-trans,octa-cis-undecaprenyl phosphate = di-trans,octa-cis-undecaprenyl diphospho-N-acetyl-alpha-D-muramoyl-L-alanyl-D-glutamyl-meso-2,6-diaminopimeloyl-D-alanyl-D-alanine + UMP. It participates in cell wall biogenesis; peptidoglycan biosynthesis. Its function is as follows. Catalyzes the initial step of the lipid cycle reactions in the biosynthesis of the cell wall peptidoglycan: transfers peptidoglycan precursor phospho-MurNAc-pentapeptide from UDP-MurNAc-pentapeptide onto the lipid carrier undecaprenyl phosphate, yielding undecaprenyl-pyrophosphoryl-MurNAc-pentapeptide, known as lipid I. The protein is Phospho-N-acetylmuramoyl-pentapeptide-transferase of Clostridium kluyveri (strain NBRC 12016).